A 111-amino-acid chain; its full sequence is MFVLVMICLFCQYWGVLNELEEEDRGLLCYKCKKYHLGLCYGIMTSCVPNHRQTCAAENFYILTKKGQSMYHYSRLSCMTNCEDINFLSFERRTELICCKHSNYCNLPMGL.

Residues Met1–Asn18 form the signal peptide. The region spanning Leu27 to Pro108 is the UPAR/Ly6 domain. Disulfide bonds link Cys29–Cys55, Cys32–Cys40, Cys47–Cys78, and Cys82–Cys99.

The protein belongs to the PATE family. As to expression, expressed in prostate, testis, brain and lung.

The protein resides in the secreted. In Mus musculus (Mouse), this protein is Prostate and testis expressed protein 2 (Pate2).